Consider the following 216-residue polypeptide: NADH-quinone oxidoreductase subunit C (216 aa).

The protein belongs to the complex I 30 kDa subunit family. In terms of assembly, NDH-1 is composed of 14 different subunits. Subunits NuoB, C, D, E, F, and G constitute the peripheral sector of the complex.

The protein localises to the cell inner membrane. The enzyme catalyses a quinone + NADH + 5 H(+)(in) = a quinol + NAD(+) + 4 H(+)(out). In terms of biological role, NDH-1 shuttles electrons from NADH, via FMN and iron-sulfur (Fe-S) centers, to quinones in the respiratory chain. The immediate electron acceptor for the enzyme in this species is believed to be ubiquinone. Couples the redox reaction to proton translocation (for every two electrons transferred, four hydrogen ions are translocated across the cytoplasmic membrane), and thus conserves the redox energy in a proton gradient. The chain is NADH-quinone oxidoreductase subunit C from Francisella tularensis subsp. holarctica (strain OSU18).